The chain runs to 54 residues: Ovomucoid (54 aa).

A Kazal-like domain is found at 4-54; the sequence is VDCSDYPKPACRMEYMPLCGSDNKTYGNKCNFCNAVVDSNGTLTLSHFGKC. Cystine bridges form between C6–C36, C14–C33, and C22–C54. N43 is a glycosylation site (N-linked (GlcNAc...) asparagine).

It localises to the secreted. The protein is Ovomucoid of Cereopsis novaehollandiae (Cape Barren goose).